We begin with the raw amino-acid sequence, 513 residues long: MQLNSTEISDLIKQRIGKFEAVSEARNEGTIVSVSDGIVRINGLAECMQGEMIELPNGGFAMALNLERDSVGAVVMGPFRDLREGQKVKSTGRILEVPVGKGLLGRVVNTLGAPIDGKGPIENDGYSPIEVIAPGVIDRKSVDQPVQTGWKSIDSMVPIGRGQRELIIGDRQVGKTAIAIDAIINQKHTGLFSIYVAIGQKASTIANVVNKLEEHGALENTIVVVASASETAALQYLAPYAGCSMGEYFRDRGEDALIVYDDLSKQAVAYRQISLLLKRPPGREAYPGDVFYLHSRLLERASRVSAAYVEAFTKGAVKGKTGSLTALPIIETQGGDVSAFVPTNVISITDGQIFLTTELFNSGIRPAVDPGISVSRVGGSAQCKVIKKLAGGIRTALAQYRELAAFAQFASDLDETTRKQLDHGKKVTELMKQKQYAPMSVAEQALSLFSAEKGYLTDVDVEKVLDFESSLISYAKTEHAEFYAQLNETGDYSKEIEGQFHAILETFKATQTW.

Residue 169-176 (GDRQVGKT) coordinates ATP.

The protein belongs to the ATPase alpha/beta chains family. In terms of assembly, F-type ATPases have 2 components, CF(1) - the catalytic core - and CF(0) - the membrane proton channel. CF(1) has five subunits: alpha(3), beta(3), gamma(1), delta(1), epsilon(1). CF(0) has three main subunits: a(1), b(2) and c(9-12). The alpha and beta chains form an alternating ring which encloses part of the gamma chain. CF(1) is attached to CF(0) by a central stalk formed by the gamma and epsilon chains, while a peripheral stalk is formed by the delta and b chains.

It is found in the cell inner membrane. The enzyme catalyses ATP + H2O + 4 H(+)(in) = ADP + phosphate + 5 H(+)(out). Functionally, produces ATP from ADP in the presence of a proton gradient across the membrane. The alpha chain is a regulatory subunit. This Psychromonas ingrahamii (strain DSM 17664 / CCUG 51855 / 37) protein is ATP synthase subunit alpha 2.